We begin with the raw amino-acid sequence, 351 residues long: Nicotinate-nucleotide--dimethylbenzimidazole phosphoribosyltransferase (351 aa).

Catalysis depends on Glu-318, which acts as the Proton acceptor.

The protein belongs to the CobT family.

It carries out the reaction 5,6-dimethylbenzimidazole + nicotinate beta-D-ribonucleotide = alpha-ribazole 5'-phosphate + nicotinate + H(+). It functions in the pathway nucleoside biosynthesis; alpha-ribazole biosynthesis; alpha-ribazole from 5,6-dimethylbenzimidazole: step 1/2. In terms of biological role, catalyzes the synthesis of alpha-ribazole-5'-phosphate from nicotinate mononucleotide (NAMN) and 5,6-dimethylbenzimidazole (DMB). This Shewanella frigidimarina (strain NCIMB 400) protein is Nicotinate-nucleotide--dimethylbenzimidazole phosphoribosyltransferase.